The primary structure comprises 167 residues: Ubiquitin-fold modifier-conjugating enzyme 1 (167 aa).

Catalysis depends on Cys116, which acts as the Glycyl thioester intermediate. Lys122 participates in a covalent cross-link: Glycyl lysine isopeptide (Lys-Gly) (interchain with G-Cter in UFM1).

The protein belongs to the ubiquitin-conjugating enzyme family. UFC1 subfamily. In terms of assembly, interacts with UBA5 (via C-terminus). Interacts with UFL1. Interacts with UFM1. Interacts with KIRREL3. In terms of processing, ufmylated at Lys-122. Deufmylated by UFSP1.

Functionally, E2-like enzyme which specifically catalyzes the second step in ufmylation. Accepts the ubiquitin-like modifier UFM1 from the E1 enzyme UBA5 and forms an intermediate with UFM1 via a thioester linkage. Ufmylation is involved in various processes, such as ribosome recycling, response to DNA damage, interferon response or reticulophagy (also called ER-phagy). This chain is Ubiquitin-fold modifier-conjugating enzyme 1, found in Rattus norvegicus (Rat).